A 426-amino-acid chain; its full sequence is uncharacterized protein (426 aa).

This is an uncharacterized protein from Corynebacterium glutamicum (strain ATCC 13032 / DSM 20300 / JCM 1318 / BCRC 11384 / CCUG 27702 / LMG 3730 / NBRC 12168 / NCIMB 10025 / NRRL B-2784 / 534).